We begin with the raw amino-acid sequence, 155 residues long: 3-hydroxyacyl-[acyl-carrier-protein] dehydratase FabZ (155 aa).

Residue H59 is part of the active site.

This sequence belongs to the thioester dehydratase family. FabZ subfamily.

It is found in the cytoplasm. The catalysed reaction is a (3R)-hydroxyacyl-[ACP] = a (2E)-enoyl-[ACP] + H2O. Involved in unsaturated fatty acids biosynthesis. Catalyzes the dehydration of short chain beta-hydroxyacyl-ACPs and long chain saturated and unsaturated beta-hydroxyacyl-ACPs. This is 3-hydroxyacyl-[acyl-carrier-protein] dehydratase FabZ from Bartonella quintana (strain Toulouse) (Rochalimaea quintana).